Here is a 432-residue protein sequence, read N- to C-terminus: Adenylosuccinate synthetase (432 aa).

GTP-binding positions include glycine 13–lysine 19 and glycine 41–threonine 43. The Proton acceptor role is filled by aspartate 14. 2 residues coordinate Mg(2+): aspartate 14 and glycine 41. IMP contacts are provided by residues aspartate 14–lysine 17, asparagine 39–histidine 42, threonine 130, arginine 144, glutamine 225, threonine 240, and arginine 304. Residue histidine 42 is the Proton donor of the active site. Alanine 300 to arginine 306 is a substrate binding site. GTP-binding positions include arginine 306, lysine 332–aspartate 334, and serine 415–glycine 417.

This sequence belongs to the adenylosuccinate synthetase family. In terms of assembly, homodimer. Mg(2+) serves as cofactor.

The protein localises to the cytoplasm. The catalysed reaction is IMP + L-aspartate + GTP = N(6)-(1,2-dicarboxyethyl)-AMP + GDP + phosphate + 2 H(+). The protein operates within purine metabolism; AMP biosynthesis via de novo pathway; AMP from IMP: step 1/2. In terms of biological role, plays an important role in the de novo pathway of purine nucleotide biosynthesis. Catalyzes the first committed step in the biosynthesis of AMP from IMP. The polypeptide is Adenylosuccinate synthetase (Pasteurella multocida (strain Pm70)).